An 864-amino-acid chain; its full sequence is DNA mismatch repair protein MutS (864 aa).

G607 to S614 provides a ligand contact to ATP.

It belongs to the DNA mismatch repair MutS family.

Its function is as follows. This protein is involved in the repair of mismatches in DNA. It is possible that it carries out the mismatch recognition step. This protein has a weak ATPase activity. This chain is DNA mismatch repair protein MutS, found in Neisseria meningitidis serogroup C / serotype 2a (strain ATCC 700532 / DSM 15464 / FAM18).